The following is a 245-amino-acid chain: Uridylate kinase (245 aa).

Lysine 12–glycine 15 provides a ligand contact to ATP. The involved in allosteric activation by GTP stretch occupies residues glycine 20–glycine 25. Residue glycine 54 coordinates UMP. ATP contacts are provided by glycine 55 and arginine 59. UMP-binding positions include aspartate 74 and isoleucine 135 to threonine 142. ATP is bound by residues asparagine 163, tyrosine 169, and aspartate 172.

Belongs to the UMP kinase family. In terms of assembly, homohexamer.

The protein resides in the cytoplasm. It catalyses the reaction UMP + ATP = UDP + ADP. It functions in the pathway pyrimidine metabolism; CTP biosynthesis via de novo pathway; UDP from UMP (UMPK route): step 1/1. Allosterically activated by GTP. Inhibited by UTP. Its function is as follows. Catalyzes the reversible phosphorylation of UMP to UDP. The chain is Uridylate kinase from Streptococcus thermophilus (strain ATCC BAA-250 / LMG 18311).